A 350-amino-acid chain; its full sequence is tRNA U34 carboxymethyltransferase (350 aa).

Residues lysine 101, tryptophan 125, lysine 130, glycine 150, 172–174 (DPS), 208–209 (LE), methionine 224, tyrosine 228, and arginine 343 each bind carboxy-S-adenosyl-L-methionine.

Belongs to the class I-like SAM-binding methyltransferase superfamily. CmoB family. Homotetramer.

The enzyme catalyses carboxy-S-adenosyl-L-methionine + 5-hydroxyuridine(34) in tRNA = 5-carboxymethoxyuridine(34) in tRNA + S-adenosyl-L-homocysteine + H(+). In terms of biological role, catalyzes carboxymethyl transfer from carboxy-S-adenosyl-L-methionine (Cx-SAM) to 5-hydroxyuridine (ho5U) to form 5-carboxymethoxyuridine (cmo5U) at position 34 in tRNAs. This Psychrobacter arcticus (strain DSM 17307 / VKM B-2377 / 273-4) protein is tRNA U34 carboxymethyltransferase.